The following is a 261-amino-acid chain: Cytochrome c oxidase subunit 3 (261 aa).

Residues 1–15 lie on the Mitochondrial matrix side of the membrane; sequence MTHQTHAYHMVNPSP. Residues 16-34 form a helical membrane-spanning segment; sequence WPLTGALSALLMTSGLVMW. Topologically, residues 35–40 are mitochondrial intermembrane; it reads FHYHST. A helical membrane pass occupies residues 41–66; it reads ILVLLGLLTNILTMYQWWRDVVREGT. At 67 to 72 the chain is on the mitochondrial matrix side; it reads FQGHHT. Residues 73-105 traverse the membrane as a helical segment; sequence PTVQKGLRYGMVLFIISEVFFFAGFFWAFYHSS. Residues 106-128 are Mitochondrial intermembrane-facing; that stretch reads LAPTPELGGCWPPTGIHPLDPME. A helical membrane pass occupies residues 129 to 152; the sequence is VPLLNTSVLLASGVTITWAHHSLM. The Mitochondrial matrix segment spans residues 153 to 155; the sequence is EGN. Residues 156 to 183 form a helical membrane-spanning segment; it reads RKQMLQALFITISLGIYFTLLQASEYHE. Topologically, residues 184–190 are mitochondrial intermembrane; it reads ASFSISD. The chain crosses the membrane as a helical span at residues 191-223; the sequence is GIYGSTFFMATGFHGLHVIIGSTFLAVCFLRQL. Topologically, residues 224–232 are mitochondrial matrix; that stretch reads KFHFTSNHH. The chain crosses the membrane as a helical span at residues 233 to 256; the sequence is FGFEAAAWYWHFVDVVWLFLYVSI. Topologically, residues 257–261 are mitochondrial intermembrane; the sequence is YWWGS.

This sequence belongs to the cytochrome c oxidase subunit 3 family. Component of the cytochrome c oxidase (complex IV, CIV), a multisubunit enzyme composed of 14 subunits. The complex is composed of a catalytic core of 3 subunits MT-CO1, MT-CO2 and MT-CO3, encoded in the mitochondrial DNA, and 11 supernumerary subunits COX4I, COX5A, COX5B, COX6A, COX6B, COX6C, COX7A, COX7B, COX7C, COX8 and NDUFA4, which are encoded in the nuclear genome. The complex exists as a monomer or a dimer and forms supercomplexes (SCs) in the inner mitochondrial membrane with NADH-ubiquinone oxidoreductase (complex I, CI) and ubiquinol-cytochrome c oxidoreductase (cytochrome b-c1 complex, complex III, CIII), resulting in different assemblies (supercomplex SCI(1)III(2)IV(1) and megacomplex MCI(2)III(2)IV(2)).

The protein localises to the mitochondrion inner membrane. It catalyses the reaction 4 Fe(II)-[cytochrome c] + O2 + 8 H(+)(in) = 4 Fe(III)-[cytochrome c] + 2 H2O + 4 H(+)(out). Component of the cytochrome c oxidase, the last enzyme in the mitochondrial electron transport chain which drives oxidative phosphorylation. The respiratory chain contains 3 multisubunit complexes succinate dehydrogenase (complex II, CII), ubiquinol-cytochrome c oxidoreductase (cytochrome b-c1 complex, complex III, CIII) and cytochrome c oxidase (complex IV, CIV), that cooperate to transfer electrons derived from NADH and succinate to molecular oxygen, creating an electrochemical gradient over the inner membrane that drives transmembrane transport and the ATP synthase. Cytochrome c oxidase is the component of the respiratory chain that catalyzes the reduction of oxygen to water. Electrons originating from reduced cytochrome c in the intermembrane space (IMS) are transferred via the dinuclear copper A center (CU(A)) of subunit 2 and heme A of subunit 1 to the active site in subunit 1, a binuclear center (BNC) formed by heme A3 and copper B (CU(B)). The BNC reduces molecular oxygen to 2 water molecules using 4 electrons from cytochrome c in the IMS and 4 protons from the mitochondrial matrix. The protein is Cytochrome c oxidase subunit 3 (MT-CO3) of Dugong dugon (Dugong).